Here is a 694-residue protein sequence, read N- to C-terminus: Polyphosphate kinase (694 aa).

ATP is bound at residue asparagine 45. 2 residues coordinate Mg(2+): arginine 367 and arginine 397. Residue histidine 427 is the Phosphohistidine intermediate of the active site. Tyrosine 460, arginine 553, and histidine 580 together coordinate ATP.

This sequence belongs to the polyphosphate kinase 1 (PPK1) family. Mg(2+) is required as a cofactor. In terms of processing, an intermediate of this reaction is the autophosphorylated ppk in which a phosphate is covalently linked to a histidine residue through a N-P bond.

It carries out the reaction [phosphate](n) + ATP = [phosphate](n+1) + ADP. In terms of biological role, catalyzes the reversible transfer of the terminal phosphate of ATP to form a long-chain polyphosphate (polyP). This is Polyphosphate kinase from Campylobacter jejuni subsp. doylei (strain ATCC BAA-1458 / RM4099 / 269.97).